Reading from the N-terminus, the 177-residue chain is Large ribosomal subunit protein uL6 (177 aa).

The protein belongs to the universal ribosomal protein uL6 family. Part of the 50S ribosomal subunit.

Its function is as follows. This protein binds to the 23S rRNA, and is important in its secondary structure. It is located near the subunit interface in the base of the L7/L12 stalk, and near the tRNA binding site of the peptidyltransferase center. The protein is Large ribosomal subunit protein uL6 of Cupriavidus necator (strain ATCC 17699 / DSM 428 / KCTC 22496 / NCIMB 10442 / H16 / Stanier 337) (Ralstonia eutropha).